A 67-amino-acid chain; its full sequence is Conotoxin TsMMSK-B022 (67 aa).

Positions 1–22 are cleaved as a signal peptide; that stretch reads MMSKLGVLLTICLLLFPLTAVS. The propeptide occupies 23-50; it reads LDGDQPADLPELRAQDFAPERSPWFDPV. Cystine bridges form between C53-C65, C54-C61, and C58-C64. A 4-hydroxyproline modification is found at P63.

Belongs to the conotoxin M superfamily. Expressed by the venom duct.

It is found in the secreted. The sequence is that of Conotoxin TsMMSK-B022 from Conus tessulatus (Tessellate cone).